Here is a 785-residue protein sequence, read N- to C-terminus: Endonuclease MutS2 (785 aa).

Residue 332–339 (GPNTGGKT) participates in ATP binding. The Smr domain occupies 710 to 785 (IDLRGLDAEE…GDGATIVELK (76 aa)).

The protein belongs to the DNA mismatch repair MutS family. MutS2 subfamily. As to quaternary structure, homodimer. Binds to stalled ribosomes, contacting rRNA.

Endonuclease that is involved in the suppression of homologous recombination and thus may have a key role in the control of bacterial genetic diversity. Functionally, acts as a ribosome collision sensor, splitting the ribosome into its 2 subunits. Detects stalled/collided 70S ribosomes which it binds and splits by an ATP-hydrolysis driven conformational change. Acts upstream of the ribosome quality control system (RQC), a ribosome-associated complex that mediates the extraction of incompletely synthesized nascent chains from stalled ribosomes and their subsequent degradation. Probably generates substrates for RQC. This Clostridium botulinum (strain Alaska E43 / Type E3) protein is Endonuclease MutS2.